The chain runs to 327 residues: G-protein coupled receptor 55 (327 aa).

At 1-20 (MSQPERDNCSFDSVDKLTRT) the chain is on the extracellular side. Residue N8 is glycosylated (N-linked (GlcNAc...) asparagine). Residues 21–41 (LQLAVHIPTFLLGLVLNLLAI) form a helical membrane-spanning segment. Topologically, residues 42–57 (RGFSAFLKKRKLDYIA) are cytoplasmic. The chain crosses the membrane as a helical span at residues 58-78 (TSIYMINLAVFDLLLVLSLPF). At 79-93 (KMVLPQVESPLPSFC) the chain is on the extracellular side. Residues 94–114 (TLVECLYFISMYGSVFTICFI) form a helical membrane-spanning segment. Residues 115 to 136 (SLDRFLAIQYPILASHLRSPRK) lie on the Cytoplasmic side of the membrane. A helical transmembrane segment spans residues 137 to 157 (TFGICCIIWMLVWIGSIPIYT). Over 158–179 (FHREVERYKCFHNMSDVTWSAS) the chain is Extracellular. An N-linked (GlcNAc...) asparagine glycan is attached at N170. A helical membrane pass occupies residues 180–200 (VFFPLEIFGFLLPMGIMGFCS). Residues 201-239 (YRSIHILLRRPDSTEDWVQQRDTKGWVQKRACIWTIATN) lie on the Cytoplasmic side of the membrane. A helical transmembrane segment spans residues 240–260 (LVIFVVSFLPVHLGFFLQYLV). The Extracellular segment spans residues 261–279 (RNRFILDCRMKQGISLFLQ). A helical transmembrane segment spans residues 280-300 (LSLCFSNINCCLDVFCYYFVI). The Cytoplasmic portion of the chain corresponds to 301–327 (KEFRMRIKAHRPSTIKLVNQDTMVSRG).

The protein belongs to the G-protein coupled receptor 1 family. In terms of tissue distribution, highly expressed in splenic plasma cells.

It is found in the cell membrane. G-protein coupled receptor that binds to several ligands including 2-arachidonoyl lysophosphatidylinositol or lysophosphatidylglucoside with high affinity, leading to rapid and transient activation of numerous intracellular signaling pathways. Induces the Ca(2+) release from intracellular stores via ERK, the heterotrimeric G protein GNA13 and RHOA leading to morphological changes including cell rounding and stress fiber formation. In macrophages, acts downstream of lysophosphatidylglucoside to inhibit the translocation of the phospholipid-transporting ABCA1 to plasma membrane and subsequent cholesterol efflux leading to lipid accumulation and foam cell formation. May be involved in hyperalgesia associated with inflammatory and neuropathic pain. The polypeptide is G-protein coupled receptor 55 (Gpr55) (Mus musculus (Mouse)).